Reading from the N-terminus, the 359-residue chain is Fructose-bisphosphate aldolase class 2 (359 aa).

Ser-61 is a binding site for D-glyceraldehyde 3-phosphate. Asp-110 acts as the Proton donor in catalysis. The Zn(2+) site is built by His-111, Asp-145, Glu-175, and His-227. Dihydroxyacetone phosphate is bound at residue Gly-228. Zn(2+) is bound at residue His-265. Residues 266 to 268 and 287 to 290 contribute to the dihydroxyacetone phosphate site; these read GGS and NIDT.

This sequence belongs to the class II fructose-bisphosphate aldolase family. The cofactor is Zn(2+).

The catalysed reaction is beta-D-fructose 1,6-bisphosphate = D-glyceraldehyde 3-phosphate + dihydroxyacetone phosphate. It participates in carbohydrate degradation; glycolysis; D-glyceraldehyde 3-phosphate and glycerone phosphate from D-glucose: step 4/4. Its function is as follows. Catalyzes the aldol condensation of dihydroxyacetone phosphate (DHAP or glycerone-phosphate) with glyceraldehyde 3-phosphate (G3P) to form fructose 1,6-bisphosphate (FBP) in gluconeogenesis and the reverse reaction in glycolysis. The protein is Fructose-bisphosphate aldolase class 2 (fbaA) of Buchnera aphidicola subsp. Schizaphis graminum (strain Sg).